The chain runs to 413 residues: Na(+)-translocating NADH-quinone reductase subunit B (413 aa).

Transmembrane regions (helical) follow at residues 55-75 (IMIM…YNAG), 128-148 (FLPI…LFCM), and 163-183 (ILFA…LGIT). Residue T235 is modified to FMN phosphoryl threonine. 5 helical membrane passes run 267–287 (IPGS…AMIV), 296–316 (IIAG…VIGS), 324–344 (MPWH…FMAT), 357–377 (WWYG…NPAY), and 380–400 (GMML…HVVI).

Belongs to the NqrB/RnfD family. Composed of six subunits; NqrA, NqrB, NqrC, NqrD, NqrE and NqrF. Requires FMN as cofactor.

It localises to the cell inner membrane. It carries out the reaction a ubiquinone + n Na(+)(in) + NADH + H(+) = a ubiquinol + n Na(+)(out) + NAD(+). In terms of biological role, NQR complex catalyzes the reduction of ubiquinone-1 to ubiquinol by two successive reactions, coupled with the transport of Na(+) ions from the cytoplasm to the periplasm. NqrA to NqrE are probably involved in the second step, the conversion of ubisemiquinone to ubiquinol. In Vibrio campbellii (strain ATCC BAA-1116), this protein is Na(+)-translocating NADH-quinone reductase subunit B.